A 390-amino-acid polypeptide reads, in one-letter code: DNA primase small subunit PriS (390 aa).

Residues Asp98, Asp100, and Asp296 contribute to the active site.

The protein belongs to the eukaryotic-type primase small subunit family. Heterodimer of a small subunit (PriS) and a large subunit (PriL). The cofactor is Mg(2+). It depends on Mn(2+) as a cofactor.

Functionally, catalytic subunit of DNA primase, an RNA polymerase that catalyzes the synthesis of short RNA molecules used as primers for DNA polymerase during DNA replication. The small subunit contains the primase catalytic core and has DNA synthesis activity on its own. Binding to the large subunit stabilizes and modulates the activity, increasing the rate of DNA synthesis while decreasing the length of the DNA fragments, and conferring RNA synthesis capability. The DNA polymerase activity may enable DNA primase to also catalyze primer extension after primer synthesis. May also play a role in DNA repair. The polypeptide is DNA primase small subunit PriS (Methanococcoides burtonii (strain DSM 6242 / NBRC 107633 / OCM 468 / ACE-M)).